Here is a 1657-residue protein sequence, read N- to C-terminus: Endoribonuclease Dicer homolog 4 (1657 aa).

Residues 1–14 (MGDAAAAAPAAAAA) show a composition bias toward low complexity. A disordered region spans residues 1–26 (MGDAAAAAPAAAAAGPSSTRGEPKDP). The Helicase ATP-binding domain maps to 37–214 (LCKRAVEENI…SHSFTEKGGR (178 aa)). 50 to 57 (LGTGCGKT) serves as a coordination point for ATP. The short motif at 157-160 (DECH) is the DECH box element. A Helicase C-terminal domain is found at 400–567 (NKFSVLINVL…TSNDMFDCLE (168 aa)). The Dicer dsRNA-binding fold domain maps to 585–675 (SVSLLHCYCD…LPGPGSRKNK (91 aa)). Residues 856–978 (DVSVHASYSS…LPPELCSLKV (123 aa)) form the PAZ domain. 2 consecutive RNase III domains span residues 1010–1173 (DVML…VEGG) and 1214–1358 (IAGL…LDSG). Mg(2+) is bound by residues Glu1252, Asp1344, and Glu1347. In terms of domain architecture, DRBM 1 spans 1384–1451 (NPMRELRELC…AQETLSKLKN (68 aa)). The segment at 1525 to 1556 (GSGKHDVNNGRNNQPKLATQSGRLPSEATEKS) is disordered. A compositionally biased stretch (polar residues) spans 1533–1547 (NGRNNQPKLATQSGR). The DRBM 2 domain occupies 1569 to 1645 (TARSFLFELC…AQGALWCLKQ (77 aa)).

Belongs to the helicase family. Dicer subfamily. As to quaternary structure, may interact with ARGONAUTE1 or PINHEAD through their common PAZ domains. Mg(2+) is required as a cofactor. Mn(2+) serves as cofactor. Expressed in roots, leaf blades, leaf sheaths, shoot apices and spikelets.

Its subcellular location is the nucleus. Functionally, involved in the RNA silencing pathway. Cleaves double-stranded RNA to produce small interfering RNAs (siRNAs) which target the selective destruction of complementary RNAs. Required for the production of 21 nucleotide siRNAs. Regulates shoot apical meristem (SAM) initiation and maintenance, leaf polarization and lemma polarity through the trans-acting siRNAS (ta-siRNAs) pathway, which probably modulate the expression of the ARF2, ARF3, ARF4, ARF14 and ARF15 genes. Can process endogenous 21 nucleotide siRNAs derived from an imperfect inverted repeat. May not be involved in microRNAs (miRNAs) production. This Oryza sativa subsp. japonica (Rice) protein is Endoribonuclease Dicer homolog 4 (DCL4).